Consider the following 272-residue polypeptide: tRNA pseudouridine synthase A (272 aa).

D52 functions as the Nucleophile in the catalytic mechanism. Y110 contacts substrate.

This sequence belongs to the tRNA pseudouridine synthase TruA family. In terms of assembly, homodimer.

The catalysed reaction is uridine(38/39/40) in tRNA = pseudouridine(38/39/40) in tRNA. Functionally, formation of pseudouridine at positions 38, 39 and 40 in the anticodon stem and loop of transfer RNAs. This is tRNA pseudouridine synthase A from Cupriavidus necator (strain ATCC 17699 / DSM 428 / KCTC 22496 / NCIMB 10442 / H16 / Stanier 337) (Ralstonia eutropha).